The sequence spans 74 residues: Omega-filistatoxin-Kh1a (74 aa).

In terms of processing, contains 6 disulfide bonds. Expressed by the venom gland.

Its subcellular location is the secreted. Functionally, potently blocks vertebrate calcium channels Cav1 and Cav2. Is the most active on Cav2.2/CACNA1B (from HEK) (IC(50)=2.3 nM), followed by Cav2.1/CACNA1A (IC(50)=4.3 nM), Cav2.2/CACNA1B (from oocyte) (IC(50)=14.4 nM), Cav1.2/CACNA1C (IC(50)=26.8 nM), and Cav2.3/CACNA1E (IC(50)=96.4 nM). This is Omega-filistatoxin-Kh1a from Kukulcania hibernalis (Southern house spider).